Reading from the N-terminus, the 732-residue chain is 1,4-alpha-glucan branching enzyme GlgB 1 (732 aa).

The active-site Nucleophile is the aspartate 411. Glutamate 464 functions as the Proton donor in the catalytic mechanism.

Belongs to the glycosyl hydrolase 13 family. GlgB subfamily. As to quaternary structure, monomer.

It carries out the reaction Transfers a segment of a (1-&gt;4)-alpha-D-glucan chain to a primary hydroxy group in a similar glucan chain.. The protein operates within glycan biosynthesis; glycogen biosynthesis. Its function is as follows. Catalyzes the formation of the alpha-1,6-glucosidic linkages in glycogen by scission of a 1,4-alpha-linked oligosaccharide from growing alpha-1,4-glucan chains and the subsequent attachment of the oligosaccharide to the alpha-1,6 position. The protein is 1,4-alpha-glucan branching enzyme GlgB 1 of Xanthomonas euvesicatoria pv. vesicatoria (strain 85-10) (Xanthomonas campestris pv. vesicatoria).